A 339-amino-acid polypeptide reads, in one-letter code: ADP-L-glycero-D-manno-heptose-6-epimerase (339 aa).

NADP(+) is bound by residues 11–12 (FI), 32–33 (DD), Lys39, Lys54, 75–79 (EGACS), and Asn92. Tyr139 serves as the catalytic Proton acceptor. Residue Lys143 participates in NADP(+) binding. Asn170 contributes to the substrate binding site. Residues Val171 and Lys179 each coordinate NADP(+). The active-site Proton acceptor is Lys179. Substrate-binding positions include Arg181, His188, 202 to 205 (FGEY), Arg215, and Tyr294.

It belongs to the NAD(P)-dependent epimerase/dehydratase family. HldD subfamily. In terms of assembly, homopentamer. The cofactor is NADP(+).

The enzyme catalyses ADP-D-glycero-beta-D-manno-heptose = ADP-L-glycero-beta-D-manno-heptose. The protein operates within nucleotide-sugar biosynthesis; ADP-L-glycero-beta-D-manno-heptose biosynthesis; ADP-L-glycero-beta-D-manno-heptose from D-glycero-beta-D-manno-heptose 7-phosphate: step 4/4. In terms of biological role, catalyzes the interconversion between ADP-D-glycero-beta-D-manno-heptose and ADP-L-glycero-beta-D-manno-heptose via an epimerization at carbon 6 of the heptose. The sequence is that of ADP-L-glycero-D-manno-heptose-6-epimerase from Polynucleobacter necessarius subsp. necessarius (strain STIR1).